Reading from the N-terminus, the 95-residue chain is Large ribosomal subunit protein bL25 (95 aa).

It belongs to the bacterial ribosomal protein bL25 family. Part of the 50S ribosomal subunit; part of the 5S rRNA/L5/L18/L25 subcomplex. Contacts the 5S rRNA. Binds to the 5S rRNA independently of L5 and L18.

Its function is as follows. This is one of the proteins that binds to the 5S RNA in the ribosome where it forms part of the central protuberance. The sequence is that of Large ribosomal subunit protein bL25 from Shewanella halifaxensis (strain HAW-EB4).